Reading from the N-terminus, the 275-residue chain is Glycerol-3-phosphate dehydrogenase [NAD(P)+] (275 aa).

W12, R32, and K105 together coordinate NADPH. Residues K105, G133, and T135 each coordinate sn-glycerol 3-phosphate. A137 provides a ligand contact to NADPH. Positions 188, 241, 251, 252, and 253 each coordinate sn-glycerol 3-phosphate. The active-site Proton acceptor is K188. An NADPH-binding site is contributed by R252.

This sequence belongs to the NAD-dependent glycerol-3-phosphate dehydrogenase family.

The protein resides in the cytoplasm. It catalyses the reaction sn-glycerol 3-phosphate + NAD(+) = dihydroxyacetone phosphate + NADH + H(+). The enzyme catalyses sn-glycerol 3-phosphate + NADP(+) = dihydroxyacetone phosphate + NADPH + H(+). Its pathway is membrane lipid metabolism; glycerophospholipid metabolism. Catalyzes the reduction of the glycolytic intermediate dihydroxyacetone phosphate (DHAP) to sn-glycerol 3-phosphate (G3P), the key precursor for phospholipid synthesis. This is Glycerol-3-phosphate dehydrogenase [NAD(P)+] from Paramagnetospirillum magneticum (strain ATCC 700264 / AMB-1) (Magnetospirillum magneticum).